An 802-amino-acid polypeptide reads, in one-letter code: Putative flavin carrier protein 3 (802 aa).

Residues 1 to 28 (MRFLQVYKSSALIGLIILLASKVNLAEA) form the signal peptide. At 29–169 (KRKLVATSLV…YFSNGKTVSQ (141 aa)) the chain is on the lumenal side. Asparagine 149 is a glycosylation site (N-linked (GlcNAc...) asparagine). The helical transmembrane segment at 170–190 (IGVKWATAVVAGIGLLLSAIL) threads the bilayer. At 191–200 (STFGNSTAAS) the chain is on the cytoplasmic side. A helical transmembrane segment spans residues 201–221 (HISANTMSLFLYFQSVVVVAM). Over 222–229 (QHVHRVPP) the chain is Lumenal. Residues 230–250 (IAAAWAENLVWSMGLIRISFM) traverse the membrane as a helical segment. Over 251–255 (QRIFR) the chain is Cytoplasmic. A helical transmembrane segment spans residues 256–278 (WYVQSTGGTPSLYLTSTSMSVLA). At 279-323 (QRSWQYLMELPLIKRATNVLYGNANTLIFRGIKRLGYKMGIENTS) the chain is on the lumenal side. Asparagine 321 carries an N-linked (GlcNAc...) asparagine glycan. The chain crosses the membrane as a helical span at residues 324 to 344 (IVCTGFTFFVLCGYVLAGFII). At 345–377 (VFKCCVELATRLGWIQKARFWEFRKQWRMILKG) the chain is on the cytoplasmic side. The helical transmembrane segment at 378-398 (ALLRYIYIGFVQLTILSFWEF) threads the bilayer. Residues 399 to 405 (TERDSPA) lie on the Lumenal side of the membrane. The helical transmembrane segment at 406–426 (VIVIACLFILLSCGLMLWAAW) threads the bilayer. Topologically, residues 427–467 (RTVFFARRSVALYNNPAALLYGDEYVLHKYGFFYTMFNANH) are cytoplasmic. The helical transmembrane segment at 468–488 (YWWNIVLLSYIFVKSLLVGFA) threads the bilayer. Residues 489–495 (QASGQTQ) lie on the Lumenal side of the membrane. Residues 496–516 (VLFMFILDLFYFVAIIYYKPY) form a helical membrane-spanning segment. The Cytoplasmic segment spans residues 517 to 525 (LDRPTNIMN). The chain crosses the membrane as a helical span at residues 526-546 (ILIATVTVVNSFLFMFFSDLF). Asparagine 547 carries N-linked (GlcNAc...) asparagine glycosylation. At 547 to 557 (NQSYKVAAIMG) the chain is on the lumenal side. The chain crosses the membrane as a helical span at residues 558–578 (WIFFIMNAAFSFILLMMILAF). Residues 579 to 802 (AGMMLFSKNP…PPGFFDEGFM (224 aa)) are Cytoplasmic-facing. A phosphoserine mark is found at serine 616 and serine 635. Positions 629 to 802 (KDHDDNSDYE…PPGFFDEGFM (174 aa)) are disordered. Composition is skewed to polar residues over residues 653 to 663 (DETTPTTVTSS), 697 to 717 (KQQT…STLG), and 761 to 788 (DTSS…NNKQ). 2 positions are modified to phosphoserine: serine 779 and serine 782.

The protein belongs to the transient receptor potential (TRP) ion channel family.

The protein localises to the endoplasmic reticulum membrane. Functionally, may be responsible for the transport of FAD into the endoplasmic reticulum lumen, where it is required for oxidative protein folding. The sequence is that of Putative flavin carrier protein 3 (FLC3) from Saccharomyces cerevisiae (strain ATCC 204508 / S288c) (Baker's yeast).